The chain runs to 799 residues: Putative mRNA-capping enzyme P5 (799 aa).

The protein belongs to the phytoreovirus protein P5 family.

The protein resides in the virion. The protein localises to the host cytoplasm. The enzyme catalyses a 5'-end diphospho-ribonucleoside in mRNA + GTP + H(+) = a 5'-end (5'-triphosphoguanosine)-ribonucleoside in mRNA + diphosphate. Its pathway is mRNA processing; mRNA capping. Enzyme involved in mRNA capping (Potential). Binds to GTP and might have guanylyltransferase activity. Together with the RNA-directed RNA polymerase P1 and protein P7, forms an transcriptional complex positioned near the channels situated at each of the five-fold vertices of the core. The chain is Putative mRNA-capping enzyme P5 from Nephotettix cincticeps (Green rice leafhopper).